The primary structure comprises 531 residues: Importin subunit alpha-3 (531 aa).

In terms of domain architecture, IBB spans 1 to 58; it reads MSLRPSAKTEVRRNRYKVAVDAEEGRRRREDNLVEIRKNKREENLQKKRFTSSMAFGS. ARM repeat units follow at residues 111–153, 154–198, 199–236, 237–281, 282–321, 322–364, 365–405, and 406–447; these read INEV…TSEN, TNVI…CRDL, VLSY…RGKP, PPAF…DKIQ, AVIE…DDLQ, TQMV…NADQ, IQAV…GGTH, and DQIK…VVGE. The segment at 500–524 is disordered; it reads DNEEEGNDENHAPQSGFQFGSTNVP. A compositionally biased stretch (polar residues) spans 511–524; that stretch reads APQSGFQFGSTNVP.

Belongs to the importin alpha family. Forms a complex with importin subunit beta-1. Interacts with PRL1. Interacts with A.tumefaciens VirD2 and VirE2.

Its subcellular location is the nucleus. Functionally, binds to conventional NLS motifs and mediates nuclear protein import across the nuclear envelope. Acts as a cellular receptor for the nuclear import of the virD2 protein of Agrobacterium, but is not essential for Agrobacterium-mediated root transformation. May be involved in the regulation of pathogen-induced salicylic acid accumulation. The chain is Importin subunit alpha-3 from Arabidopsis thaliana (Mouse-ear cress).